Consider the following 280-residue polypeptide: MLFLEGLMQYSFLQKALITSVTVGIVSGVIGSFIILRGMSLMGDAISHAVLPGVAISYMMGMNFFIGAATFGIAAALGIGFVNQKSRIKNDTAIGIVFSAFFALGIILISFAKSSTDLYHILFGNVLAVRSSDMWMTIIIAIIVISLVALFYKEFLVSSFDPVMAEAYGLNVKFLHYFLMLLLTLVTVSALQTVGIILVVAMLITPAATAYLLTNKLSKMIVLASTFGAVSAIIGLYFSYIFNLASGAAMVLVATIIFFIAFLFAPKQGLLFSKKREVIE.

9 consecutive transmembrane segments (helical) span residues 16-36, 41-61, 62-82, 92-112, 137-157, 168-188, 193-213, 221-241, and 244-264; these read ALIT…FIIL, LMGD…YMMG, MNFF…IGFV, TAIG…ISFA, TIII…EFLV, YGLN…LVTV, TVGI…AYLL, IVLA…FSYI, and LASG…AFLF.

Belongs to the ABC-3 integral membrane protein family.

The protein resides in the cell membrane. In terms of biological role, this protein is probably a component of a manganese permease, a binding protein-dependent, ATP-driven transport system. This is Manganese transport system membrane protein MntC (mntC) from Listeria monocytogenes serovar 1/2a (strain ATCC BAA-679 / EGD-e).